Consider the following 131-residue polypeptide: EG45-like domain containing protein (131 aa).

A signal peptide spans 1 to 24 (MGVGTKVLVITTMAICLISSAAYA). Residues 27–131 (GTATFYTPPY…GKIKIEFNQA (105 aa)) form the Expansin-like EG45; incomplete domain. Cysteines 73 and 85 form a disulfide.

In terms of tissue distribution, expressed in the outer layer of xylem and the vascular cambial zone of roots, in shoot cambium, but not in leaves.

It localises to the secreted. Its function is as follows. Might have a systemic role in water and solute homeostasis. Has no expansin-like activity. The protein is EG45-like domain containing protein (CjBAp12) of Citrus jambhiri (Rough lemon).